A 309-amino-acid chain; its full sequence is Branched-chain-amino-acid aminotransferase (309 aa).

The residue at position 160 (Lys-160) is an N6-(pyridoxal phosphate)lysine.

The protein belongs to the class-IV pyridoxal-phosphate-dependent aminotransferase family. Homohexamer. The cofactor is pyridoxal 5'-phosphate.

It carries out the reaction L-leucine + 2-oxoglutarate = 4-methyl-2-oxopentanoate + L-glutamate. The catalysed reaction is L-isoleucine + 2-oxoglutarate = (S)-3-methyl-2-oxopentanoate + L-glutamate. It catalyses the reaction L-valine + 2-oxoglutarate = 3-methyl-2-oxobutanoate + L-glutamate. Its pathway is amino-acid biosynthesis; L-isoleucine biosynthesis; L-isoleucine from 2-oxobutanoate: step 4/4. It participates in amino-acid biosynthesis; L-leucine biosynthesis; L-leucine from 3-methyl-2-oxobutanoate: step 4/4. It functions in the pathway amino-acid biosynthesis; L-valine biosynthesis; L-valine from pyruvate: step 4/4. Acts on leucine, isoleucine and valine. This is Branched-chain-amino-acid aminotransferase (ilvE) from Salmonella typhi.